We begin with the raw amino-acid sequence, 450 residues long: tRNA modification GTPase MnmE (450 aa).

3 residues coordinate (6S)-5-formyl-5,6,7,8-tetrahydrofolate: Arg23, Glu79, and Lys118. The TrmE-type G domain occupies 214–374; it reads GITLILVGKP…LKEHILNKVG (161 aa). Position 224 (Asn224) interacts with K(+). GTP is bound by residues 224–229, 243–249, and 268–271; these read NAGKSS, TSIAGTT, and DTAG. Ser228 is a binding site for Mg(2+). Positions 243, 245, and 248 each coordinate K(+). Thr249 serves as a coordination point for Mg(2+). Lys450 lines the (6S)-5-formyl-5,6,7,8-tetrahydrofolate pocket.

This sequence belongs to the TRAFAC class TrmE-Era-EngA-EngB-Septin-like GTPase superfamily. TrmE GTPase family. In terms of assembly, homodimer. Heterotetramer of two MnmE and two MnmG subunits. K(+) is required as a cofactor.

It localises to the cytoplasm. Its function is as follows. Exhibits a very high intrinsic GTPase hydrolysis rate. Involved in the addition of a carboxymethylaminomethyl (cmnm) group at the wobble position (U34) of certain tRNAs, forming tRNA-cmnm(5)s(2)U34. The chain is tRNA modification GTPase MnmE from Francisella tularensis subsp. tularensis (strain FSC 198).